A 125-amino-acid polypeptide reads, in one-letter code: Large ribosomal subunit protein bL12 (125 aa).

The protein belongs to the bacterial ribosomal protein bL12 family. Homodimer. Part of the ribosomal stalk of the 50S ribosomal subunit. Forms a multimeric L10(L12)X complex, where L10 forms an elongated spine to which 2 to 4 L12 dimers bind in a sequential fashion. Binds GTP-bound translation factors.

In terms of biological role, forms part of the ribosomal stalk which helps the ribosome interact with GTP-bound translation factors. Is thus essential for accurate translation. The polypeptide is Large ribosomal subunit protein bL12 (Francisella tularensis subsp. tularensis (strain SCHU S4 / Schu 4)).